A 489-amino-acid polypeptide reads, in one-letter code: Acetyl-coenzyme A carboxylase carboxyl transferase subunit beta, chloroplastic (489 aa).

The 268-residue stretch at 222–489 (LWVQCENCYG…FFPLNSNSIK (268 aa)) folds into the CoA carboxyltransferase N-terminal domain. Positions 226, 229, 245, and 248 each coordinate Zn(2+). Residues 226 to 248 (CENCYGLNYKKFFRSKMNICEQC) form a C4-type zinc finger.

This sequence belongs to the AccD/PCCB family. In terms of assembly, acetyl-CoA carboxylase is a heterohexamer composed of biotin carboxyl carrier protein, biotin carboxylase and 2 subunits each of ACCase subunit alpha and ACCase plastid-coded subunit beta (accD). The cofactor is Zn(2+).

The protein localises to the plastid. Its subcellular location is the chloroplast stroma. The enzyme catalyses N(6)-carboxybiotinyl-L-lysyl-[protein] + acetyl-CoA = N(6)-biotinyl-L-lysyl-[protein] + malonyl-CoA. It functions in the pathway lipid metabolism; malonyl-CoA biosynthesis; malonyl-CoA from acetyl-CoA: step 1/1. Its function is as follows. Component of the acetyl coenzyme A carboxylase (ACC) complex. Biotin carboxylase (BC) catalyzes the carboxylation of biotin on its carrier protein (BCCP) and then the CO(2) group is transferred by the transcarboxylase to acetyl-CoA to form malonyl-CoA. This Buxus microphylla (Littleleaf boxwood) protein is Acetyl-coenzyme A carboxylase carboxyl transferase subunit beta, chloroplastic.